A 429-amino-acid polypeptide reads, in one-letter code: Ribosomal RNA small subunit methyltransferase B (429 aa).

Residues 254-260, Asp-277, Asp-303, and Asp-322 each bind S-adenosyl-L-methionine; that span reads CAAPGGK. Cys-375 serves as the catalytic Nucleophile.

The protein belongs to the class I-like SAM-binding methyltransferase superfamily. RsmB/NOP family.

The protein resides in the cytoplasm. The catalysed reaction is cytidine(967) in 16S rRNA + S-adenosyl-L-methionine = 5-methylcytidine(967) in 16S rRNA + S-adenosyl-L-homocysteine + H(+). Specifically methylates the cytosine at position 967 (m5C967) of 16S rRNA. In Yersinia enterocolitica serotype O:8 / biotype 1B (strain NCTC 13174 / 8081), this protein is Ribosomal RNA small subunit methyltransferase B.